We begin with the raw amino-acid sequence, 262 residues long: Phosphoribosyl 1,2-cyclic phosphate 1,2-diphosphodiesterase (262 aa).

Residues H6, H8, D13, H38, E63, H76, H193, D245, and H247 each contribute to the Mn(2+) site.

The protein belongs to the PHP family. Mn(2+) serves as cofactor.

The catalysed reaction is alpha-D-ribose 1,2-cyclic phosphate 5-phosphate + H2O = D-ribose 2,5-bisphosphate + H(+). It carries out the reaction D-ribose 2,5-bisphosphate + H2O = D-ribose 5-phosphate + phosphate. Its function is as follows. Involved in degradation of methylphosphonate. Catalyzes the hydrolysis of the phosphate ester at carbon-1 of 5-phospho-D-ribose 1,2-cyclic phosphate to form ribose 2,5-bisphosphate. This intermediate is then hydrolyzed to ribose-5-phosphate and inorganic phosphate. The chain is Phosphoribosyl 1,2-cyclic phosphate 1,2-diphosphodiesterase from Eggerthella lenta (strain ATCC 25559 / DSM 2243 / CCUG 17323 / JCM 9979 / KCTC 3265 / NCTC 11813 / VPI 0255 / 1899 B) (Eubacterium lentum).